Reading from the N-terminus, the 650-residue chain is Macrolide export ATP-binding/permease protein MacB (650 aa).

The ABC transporter domain maps to 6 to 244 (LKLTGITRRF…ASSPEAASSP (239 aa)). 42–49 (GASGSGKS) lines the ATP pocket. The segment at 227–246 (QTRPEEATASSPEAASSPAT) is disordered. The span at 233–246 (ATASSPEAASSPAT) shows a compositional bias: low complexity. A run of 4 helical transmembrane segments spans residues 275–295 (FLTMLGIIIGIASVVSVVALG), 523–543 (LTLLVSMIALISLLVGGIGVM), 580–600 (LVCLFGGIAGVALSLAIGVLF), and 615–635 (SIIAAFLCSSLIGIIFGFFPA).

Belongs to the ABC transporter superfamily. Macrolide exporter (TC 3.A.1.122) family. Homodimer. Part of the tripartite efflux system MacAB-TolC, which is composed of an inner membrane transporter, MacB, a periplasmic membrane fusion protein, MacA, and an outer membrane component, TolC. The complex forms a large protein conduit and can translocate molecules across both the inner and outer membranes. Interacts with MacA.

The protein localises to the cell inner membrane. Functionally, part of the tripartite efflux system MacAB-TolC. MacB is a non-canonical ABC transporter that contains transmembrane domains (TMD), which form a pore in the inner membrane, and an ATP-binding domain (NBD), which is responsible for energy generation. Confers resistance against macrolides. The sequence is that of Macrolide export ATP-binding/permease protein MacB from Pectobacterium atrosepticum (strain SCRI 1043 / ATCC BAA-672) (Erwinia carotovora subsp. atroseptica).